We begin with the raw amino-acid sequence, 362 residues long: Phosphoserine aminotransferase (362 aa).

An L-glutamate-binding site is contributed by Arg43. Pyridoxal 5'-phosphate contacts are provided by residues Ala77–Thr78, Trp103, Thr153, Asp173, and Gln196. Residue Lys197 is modified to N6-(pyridoxal phosphate)lysine. Asn238–Thr239 is a pyridoxal 5'-phosphate binding site.

Belongs to the class-V pyridoxal-phosphate-dependent aminotransferase family. SerC subfamily. In terms of assembly, homodimer. Pyridoxal 5'-phosphate serves as cofactor.

Its subcellular location is the cytoplasm. The enzyme catalyses O-phospho-L-serine + 2-oxoglutarate = 3-phosphooxypyruvate + L-glutamate. The catalysed reaction is 4-(phosphooxy)-L-threonine + 2-oxoglutarate = (R)-3-hydroxy-2-oxo-4-phosphooxybutanoate + L-glutamate. The protein operates within amino-acid biosynthesis; L-serine biosynthesis; L-serine from 3-phospho-D-glycerate: step 2/3. It participates in cofactor biosynthesis; pyridoxine 5'-phosphate biosynthesis; pyridoxine 5'-phosphate from D-erythrose 4-phosphate: step 3/5. Its function is as follows. Catalyzes the reversible conversion of 3-phosphohydroxypyruvate to phosphoserine and of 3-hydroxy-2-oxo-4-phosphonooxybutanoate to phosphohydroxythreonine. The protein is Phosphoserine aminotransferase of Acidithiobacillus ferrooxidans (strain ATCC 23270 / DSM 14882 / CIP 104768 / NCIMB 8455) (Ferrobacillus ferrooxidans (strain ATCC 23270)).